The primary structure comprises 252 residues: Cell division protein ZapD (252 aa).

Belongs to the ZapD family. Interacts with FtsZ.

Its subcellular location is the cytoplasm. Cell division factor that enhances FtsZ-ring assembly. Directly interacts with FtsZ and promotes bundling of FtsZ protofilaments, with a reduction in FtsZ GTPase activity. This chain is Cell division protein ZapD, found in Dechloromonas aromatica (strain RCB).